The primary structure comprises 274 residues: MAASPRVSLPVGCIGAGRMAQGILEGILHKGEITPQNVMVSAPTDRNLEKLKARGCCTSHDNRSVVSNCRVVFLATKPHIIPSVLQEIYPKVTADHLIISMAAGVTLETLEKNLPPGSKVIRMMPNLPCVLQEGAIVFSRGRCAGEVEADVFESLVRTCGLCVEVPQSCIDIHTGVSGSGVAYVYTFAEALADGAVKMGMPSALARQIVAQTLLGAGKMLLQSEEHPASLRADVCTPGGTTIFGLHELEKGGLRAAVMNAVEAATTRAMDMGRK.

This sequence belongs to the pyrroline-5-carboxylate reductase family. As to quaternary structure, homodecamer; composed of 5 homodimers.

Its subcellular location is the cytoplasm. The enzyme catalyses L-proline + NADP(+) = (S)-1-pyrroline-5-carboxylate + NADPH + 2 H(+). It carries out the reaction L-proline + NAD(+) = (S)-1-pyrroline-5-carboxylate + NADH + 2 H(+). The protein operates within amino-acid biosynthesis; L-proline biosynthesis; L-proline from L-glutamate 5-semialdehyde: step 1/1. In terms of biological role, oxidoreductase that catalyzes the last step in proline biosynthesis, which corresponds to the reduction of pyrroline-5-carboxylate (P5C) to L-proline using NAD(P)H. Proline is synthesized from either glutamate or ornithine; both are converted to P5C, and then to proline via pyrroline-5-carboxylate reductases (PYCRs). PYCR3 is exclusively linked to the biosynthesis of proline from ornithine. The sequence is that of Pyrroline-5-carboxylate reductase 3 from Xenopus laevis (African clawed frog).